The following is a 133-amino-acid chain: ATP synthase epsilon chain, chloroplastic (133 aa).

The protein belongs to the ATPase epsilon chain family. In terms of assembly, F-type ATPases have 2 components, CF(1) - the catalytic core - and CF(0) - the membrane proton channel. CF(1) has five subunits: alpha(3), beta(3), gamma(1), delta(1), epsilon(1). CF(0) has three main subunits: a, b and c.

Its subcellular location is the plastid. The protein localises to the chloroplast thylakoid membrane. Functionally, produces ATP from ADP in the presence of a proton gradient across the membrane. This chain is ATP synthase epsilon chain, chloroplastic, found in Ipomoea batatas (Sweet potato).